Consider the following 42-residue polypeptide: Beta-defensin 13 (42 aa).

3 cysteine pairs are disulfide-bonded: Cys-9–Cys-38, Cys-16–Cys-31, and Cys-21–Cys-39.

It belongs to the beta-defensin family. As to expression, neutrophilic granules.

It localises to the secreted. In terms of biological role, has bactericidal activity. Active against E.coli ML35 and S.aureus 502A. The sequence is that of Beta-defensin 13 (DEFB13) from Bos taurus (Bovine).